Here is a 158-residue protein sequence, read N- to C-terminus: MLVPPPNYGMVEENFYRSGQPDQLNFPFLEKLGLKSVIWLAPEEPEPGFLDFCVDQNIELHHLGVLYSTNAWDPITEEVVLQALHLLVQPATYPVLVMCNLGRHRTGTVVGCFRKLQRWNLSAILEEYRRFVGGQKYRILNEQFIELFDEELVFGASY.

The region spanning 7–158 is the Tyrosine-protein phosphatase domain; it reads NYGMVEENFY…DEELVFGASY (152 aa). Cys99 serves as the catalytic Phosphocysteine intermediate.

It belongs to the protein-tyrosine phosphatase family.

It localises to the cytoplasm. It catalyses the reaction O-phospho-L-tyrosyl-[protein] + H2O = L-tyrosyl-[protein] + phosphate. Its function is as follows. Putative tyrosine-protein phosphatase required for protection against superoxide stress. The sequence is that of Putative tyrosine-protein phosphatase OCA1 (OCA1) from Mycosarcoma maydis (Corn smut fungus).